A 78-amino-acid polypeptide reads, in one-letter code: Conotoxin ba1890.8 (78 aa).

An N-terminal signal peptide occupies residues 1 to 22 (MKTSGRLLFLCLAVGLLLESQA). A propeptide spanning residues 23 to 61 (HPIADAEDATRNVGSDGTSVELSEILERGQDSSAEKGQR) is cleaved from the precursor. The disordered stretch occupies residues 25–78 (IADAEDATRNVGSDGTSVELSEILERGQDSSAEKGQRQNDHDVDESGHDIPFPS). Residues 34–43 (NVGSDGTSVE) are compositionally biased toward polar residues. Positions 47–72 (ILERGQDSSAEKGQRQNDHDVDESGH) are enriched in basic and acidic residues. Residue Gln-62 is modified to Pyrrolidone carboxylic acid.

This sequence belongs to the conotoxin H superfamily. Expressed by the venom duct.

The protein localises to the secreted. In terms of biological role, probable toxin. This chain is Conotoxin ba1890.8, found in Conus bayani (Bayan's cone).